The primary structure comprises 256 residues: MNNIWWQTKGQGNVHLVLLHGWGLNAEVWRCIDEELSSHFTLHLVDLPGFGRSRGFGALSLADMAEAVLQQAPDKAIWLGWSLGGLVASQIALTHPERVQALVTVASSPCFSARDEWPGIKPDVLAGFQQQLSDDFQRTVERFLALQTMGTETARQDARALKKTVLALPMPEVDVLNGGLEILKTVDLRQPLQNVSMPFLRLYGYLDGLVPRKVVPMLDKLWPHSESYIFAKAAHAPFISHPVEFCHLLVALKQRV.

The AB hydrolase-1 domain occupies 15–242 (HLVLLHGWGL…AAHAPFISHP (228 aa)). Residues Trp22, 82–83 (SL), and 143–147 (FLALQ) each bind substrate. Residue Ser82 is the Nucleophile of the active site. Active-site residues include Asp207 and His235. His235 is a substrate binding site.

It belongs to the AB hydrolase superfamily. Carboxylesterase BioH family. In terms of assembly, monomer.

It is found in the cytoplasm. The enzyme catalyses 6-carboxyhexanoyl-[ACP] methyl ester + H2O = 6-carboxyhexanoyl-[ACP] + methanol + H(+). It participates in cofactor biosynthesis; biotin biosynthesis. The physiological role of BioH is to remove the methyl group introduced by BioC when the pimeloyl moiety is complete. It allows to synthesize pimeloyl-ACP via the fatty acid synthetic pathway through the hydrolysis of the ester bonds of pimeloyl-ACP esters. The protein is Pimeloyl-[acyl-carrier protein] methyl ester esterase of Escherichia coli O8 (strain IAI1).